Consider the following 200-residue polypeptide: Glycerol-3-phosphate acyltransferase (200 aa).

The next 5 membrane-spanning stretches (helical) occupy residues 6–26 (LTLGMILAAYLAGSISSAVLV), 56–76 (SAAMVLFFDMLKGALPAYIAF), 82–102 (QVALGAIAIAACLGHIFPIFF), 118–138 (APIGHELALALMVTWIVMVLI), and 141–161 (YSSLAAITTAMLAPIYTWFLD).

This sequence belongs to the PlsY family. As to quaternary structure, probably interacts with PlsX.

It localises to the cell inner membrane. The enzyme catalyses an acyl phosphate + sn-glycerol 3-phosphate = a 1-acyl-sn-glycero-3-phosphate + phosphate. Its pathway is lipid metabolism; phospholipid metabolism. Catalyzes the transfer of an acyl group from acyl-phosphate (acyl-PO(4)) to glycerol-3-phosphate (G3P) to form lysophosphatidic acid (LPA). This enzyme utilizes acyl-phosphate as fatty acyl donor, but not acyl-CoA or acyl-ACP. The sequence is that of Glycerol-3-phosphate acyltransferase from Shewanella sediminis (strain HAW-EB3).